The primary structure comprises 118 residues: Flowering-promoting factor 1-like protein 4 (118 aa).

This sequence belongs to the FPF1 family.

The chain is Flowering-promoting factor 1-like protein 4 from Oryza sativa subsp. japonica (Rice).